Here is a 1151-residue protein sequence, read N- to C-terminus: Syntaxin-binding protein 5 (1151 aa).

The tract at residues 14–34 (TAGSSSASQQQQQQHPPGNRE) is disordered. The segment covering 17–27 (SSSASQQQQQQ) has biased composition (low complexity). 10 WD repeats span residues 61–94 (SALA…CYCQ), 101–140 (VIQL…SLKF), 145–181 (VTFC…GYVI), 200–234 (HISD…DYRY), 240–272 (IHSV…PAKP), 294–336 (PILK…KSTA), 344–378 (IVDF…LIDL), 400–477 (TCCE…YKLK), 505–619 (QIIS…ELVI), and 633–695 (TSLA…SGAG). Disordered regions lie at residues 555-595 (ETPE…GLRD) and 674-729 (SNDP…EQKM). Serine 692 bears the Phosphoserine mark. The segment covering 712–721 (SPTSGSSSPH) has biased composition (low complexity). The residue at position 723 (serine 723) is a Phosphoserine; by PKA. Serine 759 carries the phosphoserine modification. The residue at position 762 (threonine 762) is a Phosphothreonine. Serine 782 carries the post-translational modification Phosphoserine. Position 784 is a phosphothreonine (threonine 784). Serine 785 bears the Phosphoserine mark. 4 WD repeats span residues 794–851 (ISAL…SGTI), 860–934 (RMAF…QNCA), 939–983 (ITET…LDVY), and 997–1020 (CFTN…TYSQ). The segment covering 881-892 (HNVPEEKDEKEK) has biased composition (basic and acidic residues). The interval 881 to 906 (HNVPEEKDEKEKLKKRRPVSVSPSSS) is disordered. Serine 900 and serine 902 each carry phosphoserine. Threonine 1039 is modified (phosphothreonine). Residues serine 1058 and serine 1131 each carry the phosphoserine modification. Residues 1086–1146 (GIEGVKGAAS…HEIMLKYKDK (61 aa)) enclose the v-SNARE coiled-coil homology domain.

The protein belongs to the WD repeat L(2)GL family. Interacts with STX1A and STX1B via its v-SNARE homology domain. Part of a complex that contains STX1, STXBP5, SNAP25 and SYT1. Part of a complex that contains STXBP5, STX4A and SNAP23.

It localises to the cytoplasm. It is found in the cell membrane. The protein resides in the cytoplasmic vesicle membrane. Its subcellular location is the cytoplasmic vesicle. The protein localises to the secretory vesicle. It localises to the synaptic vesicle. It is found in the synapse. Plays a regulatory role in calcium-dependent exocytosis and neurotransmitter release. Inhibits membrane fusion between transport vesicles and the plasma membrane. May modulate the assembly of trans-SNARE complexes between transport vesicles and the plasma membrane. Inhibits translocation of GLUT4 from intracellular vesicles to the plasma membrane. Competes with STXBP1 for STX1 binding. The protein is Syntaxin-binding protein 5 (STXBP5) of Homo sapiens (Human).